A 330-amino-acid polypeptide reads, in one-letter code: Putative aminopeptidase (330 aa).

2 residues coordinate a divalent metal cation: H65 and D168. The active-site Proton acceptor is the E198. Residues E199, D221, and H307 each contribute to the a divalent metal cation site.

The protein belongs to the peptidase M42 family. A divalent metal cation serves as cofactor.

This chain is Putative aminopeptidase (celM), found in Acetivibrio thermocellus (Hungateiclostridium thermocellum).